Reading from the N-terminus, the 340-residue chain is NADPH dehydrogenase (340 aa).

23–26 (SPMC) is a binding site for FMN. A substrate-binding site is contributed by Tyr28. Positions 60 and 102 each coordinate FMN. Residue 164–167 (HGAH) participates in substrate binding. FMN is bound by residues Arg215 and 307 to 308 (AR).

Belongs to the NADH:flavin oxidoreductase/NADH oxidase family. NamA subfamily. Homotetramer. FMN is required as a cofactor.

The enzyme catalyses A + NADPH + H(+) = AH2 + NADP(+). In terms of biological role, catalyzes the reduction of the double bond of an array of alpha,beta-unsaturated aldehydes and ketones. It also reduces the nitro group of nitroester and nitroaromatic compounds. It could have a role in detoxification processes. The chain is NADPH dehydrogenase from Geobacillus sp. (strain WCH70).